The chain runs to 130 residues: Small ribosomal subunit protein uS11 (130 aa).

Belongs to the universal ribosomal protein uS11 family. As to quaternary structure, part of the 30S ribosomal subunit. Interacts with proteins S7 and S18. Binds to IF-3.

In terms of biological role, located on the platform of the 30S subunit, it bridges several disparate RNA helices of the 16S rRNA. Forms part of the Shine-Dalgarno cleft in the 70S ribosome. The polypeptide is Small ribosomal subunit protein uS11 (Xylella fastidiosa (strain M23)).